The primary structure comprises 4561 residues: StAR-related lipid transfer protein 9 (4561 aa).

The Kinesin motor domain maps to 3-384 (NVQVAVRVRP…MRYASNAKNI (382 aa)). Residue 103 to 110 (GQTGSGKT) coordinates ATP. Positions 307–321 (SSGGDSGVPSTTSGA) are enriched in low complexity. A disordered region spans residues 307–330 (SSGGDSGVPSTTSGASSGGGPARR). Positions 482 to 533 (TKIGRIDSDQEQDIVLQGQWIERDHCTITSTCGVVILRPTQGARCTVNGREV) constitute an FHA domain. Disordered stretches follow at residues 784–805 (SRAPSWASSSNTSGPGSQRRSR), 873–1064 (SRWR…DTES), and 1092–1153 (WNLP…PSDS). Polar residues-rich tracts occupy residues 789 to 805 (WASSSNTSGPGSQRRSR), 884 to 903 (ASTQGTHLTVSHKSVSSQEI), 911 to 920 (CQMSSQGQST), and 939 to 948 (RWASVNTKTG). Basic and acidic residues-rich tracts occupy residues 1046–1060 (RPIKDPVREEDRDLS) and 1124–1135 (SRGEYSMKDHGH). Ser1164 carries the phosphoserine modification. Disordered regions lie at residues 1288-1392 (PSGD…SDMS), 1700-1767 (REAW…EEEN), 1959-1980 (ECKAHGQSQEVQSKEEPLEEKQ), 2077-2120 (TNAT…ADRL), 2320-2356 (LATGVGDQDHSGETRSSSPQERASGDVSTTHTPLGGS), 2384-2427 (VSTS…SSLD), 2439-2467 (FLLQEDSNQGEEERQKAEETSEDQQLPNS), 2622-2656 (KPRQFCGASGRSDSSEVIEKRKEASRTKSSVDPLP), 2712-2735 (KDSILGHQEPRSLDSTHGGGSEKI), 2777-2800 (TGLEETKASPKSGAVHPEAPGNVG), 3002-3067 (RSVE…PGTL), 3185-3207 (AQTEPSQPAAQTHSQHCSDREQL), 3246-3286 (ELNL…TSLK), 3645-3703 (EGAA…LRPE), 3790-3847 (SDLA…PQQS), and 3863-3913 (QPKT…GRTT). Over residues 1300–1321 (DIHEIQPHDEKPKHWLSIEEPK) the composition is skewed to basic and acidic residues. 2 stretches are compositionally biased toward polar residues: residues 1328–1360 (LPQSSTEPPCSSDLYATSASDTSKPSVCESQGL) and 1722–1741 (PKLSQSQNSKIDSPQQTTTK). 2 stretches are compositionally biased toward basic and acidic residues: residues 1754-1767 (ELGKHSRNMREEEN) and 1970-1980 (QSKEEPLEEKQ). Residues 2077 to 2091 (TNATSNNNTQIQKLT) are compositionally biased toward polar residues. The span at 2096-2110 (RSREYVQTRESESEH) shows a compositional bias: basic and acidic residues. Composition is skewed to polar residues over residues 2333–2351 (TRSSSPQERASGDVSTTHT) and 2399–2408 (TSTGSTTQEA). Residues 2414-2463 (EATVQKERKNSSLDRISRQAEKRVSFLLQEDSNQGEEERQKAEETSEDQQ) adopt a coiled-coil conformation. Basic and acidic residues predominate over residues 2417-2427 (VQKERKNSSLD). Positions 2634-2647 (DSSEVIEKRKEASR) are enriched in basic and acidic residues. Composition is skewed to polar residues over residues 3039–3054 (LKNNSVDENGQASQTM) and 3187–3199 (TEPSQPAAQTHSQ). Positions 3689–3700 (PASPDGSPPPSL) are enriched in pro residues. Positions 3812-3835 (DSQRAESLDREGKSPLGKSSERLL) are enriched in basic and acidic residues. Polar residues predominate over residues 3863-3874 (QPKTTTGDQSKL). The stretch at 4185–4224 (SDIELMLQEYRRAREEAKVEIAQARDRLKERTEQEKMRIR) forms a coiled coil. The START domain maps to 4344-4561 (PYQDLAKHIV…VAKLASFLRS (218 aa)).

It belongs to the TRAFAC class myosin-kinesin ATPase superfamily. Kinesin family. Interacts with ATAD3A.

The protein resides in the cytoplasm. It localises to the cytoskeleton. The protein localises to the microtubule organizing center. Its subcellular location is the centrosome. It is found in the centriole. The protein resides in the nucleus. In terms of biological role, microtubule-dependent motor protein required for spindle pole assembly during mitosis. Required to stabilize the pericentriolar material (PCM). The protein is StAR-related lipid transfer protein 9 (Stard9) of Mus musculus (Mouse).